Consider the following 281-residue polypeptide: ATP phosphoribosyltransferase (281 aa).

This sequence belongs to the ATP phosphoribosyltransferase family. Long subfamily. Mg(2+) serves as cofactor.

Its subcellular location is the cytoplasm. It carries out the reaction 1-(5-phospho-beta-D-ribosyl)-ATP + diphosphate = 5-phospho-alpha-D-ribose 1-diphosphate + ATP. It functions in the pathway amino-acid biosynthesis; L-histidine biosynthesis; L-histidine from 5-phospho-alpha-D-ribose 1-diphosphate: step 1/9. Its activity is regulated as follows. Feedback inhibited by histidine. Functionally, catalyzes the condensation of ATP and 5-phosphoribose 1-diphosphate to form N'-(5'-phosphoribosyl)-ATP (PR-ATP). Has a crucial role in the pathway because the rate of histidine biosynthesis seems to be controlled primarily by regulation of HisG enzymatic activity. In Corynebacterium glutamicum (strain R), this protein is ATP phosphoribosyltransferase.